Here is a 312-residue protein sequence, read N- to C-terminus: Malate dehydrogenase (312 aa).

NAD(+) contacts are provided by residues 12–17 (GAGFTG) and aspartate 36. Substrate-binding residues include arginine 87 and arginine 93. Residues asparagine 100 and 123 to 125 (LTN) contribute to the NAD(+) site. Asparagine 125 lines the substrate pocket. Serine 149 carries the post-translational modification Phosphoserine. Arginine 156 is a substrate binding site. Histidine 180 functions as the Proton acceptor in the catalytic mechanism.

This sequence belongs to the LDH/MDH superfamily. MDH type 3 family.

The catalysed reaction is (S)-malate + NAD(+) = oxaloacetate + NADH + H(+). Catalyzes the reversible oxidation of malate to oxaloacetate. The chain is Malate dehydrogenase from Bacillus mycoides (strain KBAB4) (Bacillus weihenstephanensis).